Here is a 400-residue protein sequence, read N- to C-terminus: Cysteine desulfurase (400 aa).

Pyridoxal 5'-phosphate contacts are provided by residues 72–73 (GT), Asn-152, Gln-180, and 200–202 (SGH). The residue at position 203 (Lys-203) is an N6-(pyridoxal phosphate)lysine. Thr-238 provides a ligand contact to pyridoxal 5'-phosphate. Cys-326 acts as the Cysteine persulfide intermediate in catalysis. Residue Cys-326 participates in [2Fe-2S] cluster binding.

It belongs to the class-V pyridoxal-phosphate-dependent aminotransferase family. NifS/IscS subfamily. In terms of assembly, homodimer. It depends on pyridoxal 5'-phosphate as a cofactor.

The catalysed reaction is (sulfur carrier)-H + L-cysteine = (sulfur carrier)-SH + L-alanine. Catalyzes the removal of elemental sulfur atoms from cysteine to produce alanine. Seems to participate in the biosynthesis of the nitrogenase metalloclusters by providing the inorganic sulfur required for the Fe-S core formation. This is Cysteine desulfurase from Gluconacetobacter diazotrophicus (strain ATCC 49037 / DSM 5601 / CCUG 37298 / CIP 103539 / LMG 7603 / PAl5).